Reading from the N-terminus, the 172-residue chain is 3-hydroxydecanoyl-[acyl-carrier-protein] dehydratase (172 aa).

His-71 is an active-site residue.

Belongs to the thioester dehydratase family. FabA subfamily. In terms of assembly, homodimer.

Its subcellular location is the cytoplasm. It catalyses the reaction a (3R)-hydroxyacyl-[ACP] = a (2E)-enoyl-[ACP] + H2O. The enzyme catalyses (3R)-hydroxydecanoyl-[ACP] = (2E)-decenoyl-[ACP] + H2O. It carries out the reaction (2E)-decenoyl-[ACP] = (3Z)-decenoyl-[ACP]. It functions in the pathway lipid metabolism; fatty acid biosynthesis. Necessary for the introduction of cis unsaturation into fatty acids. Catalyzes the dehydration of (3R)-3-hydroxydecanoyl-ACP to E-(2)-decenoyl-ACP and then its isomerization to Z-(3)-decenoyl-ACP. Can catalyze the dehydratase reaction for beta-hydroxyacyl-ACPs with saturated chain lengths up to 16:0, being most active on intermediate chain length. The polypeptide is 3-hydroxydecanoyl-[acyl-carrier-protein] dehydratase (Cronobacter sakazakii (strain ATCC BAA-894) (Enterobacter sakazakii)).